The sequence spans 116 residues: Large ribosomal subunit protein bL17 (116 aa).

It belongs to the bacterial ribosomal protein bL17 family. Part of the 50S ribosomal subunit. Contacts protein L32.

The protein is Large ribosomal subunit protein bL17 of Dictyoglomus thermophilum (strain ATCC 35947 / DSM 3960 / H-6-12).